A 685-amino-acid chain; its full sequence is Methionine--tRNA ligase (685 aa).

The short motif at 12 to 22 (PYANGSIHLGH) is the 'HIGH' region element. Positions 143, 146, 156, and 159 each coordinate Zn(2+). Residues 339–343 (KMSKS) carry the 'KMSKS' region motif. Lys-342 is a binding site for ATP. The 104-residue stretch at 582–685 (DFMKIDMRVA…TGAQPGDKVG (104 aa)) folds into the tRNA-binding domain.

It belongs to the class-I aminoacyl-tRNA synthetase family. MetG type 1 subfamily. In terms of assembly, homodimer. Requires Zn(2+) as cofactor.

Its subcellular location is the cytoplasm. The enzyme catalyses tRNA(Met) + L-methionine + ATP = L-methionyl-tRNA(Met) + AMP + diphosphate. In terms of biological role, is required not only for elongation of protein synthesis but also for the initiation of all mRNA translation through initiator tRNA(fMet) aminoacylation. This chain is Methionine--tRNA ligase, found in Neisseria meningitidis serogroup B (strain ATCC BAA-335 / MC58).